We begin with the raw amino-acid sequence, 206 residues long: Large ribosomal subunit protein uL3 (206 aa).

Belongs to the universal ribosomal protein uL3 family. As to quaternary structure, part of the 50S ribosomal subunit. Forms a cluster with proteins L14 and L19.

One of the primary rRNA binding proteins, it binds directly near the 3'-end of the 23S rRNA, where it nucleates assembly of the 50S subunit. The polypeptide is Large ribosomal subunit protein uL3 (Cytophaga hutchinsonii (strain ATCC 33406 / DSM 1761 / CIP 103989 / NBRC 15051 / NCIMB 9469 / D465)).